Reading from the N-terminus, the 376-residue chain is Cyclic GMP-AMP synthase-like receptor 1 (376 aa).

Residues glutamate 77 and aspartate 79 each contribute to the Mg(2+) site.

The protein belongs to the mab-21 family. Requires Mg(2+) as cofactor. The cofactor is Mn(2+).

It carries out the reaction UTP + ATP = 3',3'-cUAMP + 2 diphosphate. In terms of biological role, nucleotidyltransferase that catalyzes the formation of cyclic UMP-AMP (3',3'-cUAMP) from ATP and UTP and plays a key role in innate immunity. Acts as a key sensor of double-stranded RNA (dsRNA), the presence of dsRNA in the cytoplasm being a danger signal that triggers the immune responses. Directly binds dsRNA, activating the nucleotidyltransferase activity, leading to synthesis of 3',3'-cUAMP, a second messenger that binds to and activates Sting, thereby triggering the immune response via activation of the NF-kappa-B transcription factor. The protein is Cyclic GMP-AMP synthase-like receptor 1 of Stylophora pistillata (Smooth cauliflower coral).